Here is a 187-residue protein sequence, read N- to C-terminus: Cell division protein SepF (187 aa).

The protein belongs to the SepF family. Homodimer. Interacts with FtsZ.

Its subcellular location is the cytoplasm. Functionally, cell division protein that is part of the divisome complex and is recruited early to the Z-ring. Probably stimulates Z-ring formation, perhaps through the cross-linking of FtsZ protofilaments. Its function overlaps with FtsA. This is Cell division protein SepF from Streptococcus suis (strain 98HAH33).